The chain runs to 145 residues: Probable inactive ribonuclease-like protein 12 (145 aa).

Residues 1 to 19 form the signal peptide; that stretch reads MVLMVVVFLLLLFWENELT.

This sequence belongs to the pancreatic ribonuclease family.

It localises to the secreted. Functionally, does not exhibit any ribonuclease activity. The protein is Probable inactive ribonuclease-like protein 12 (Rnase12) of Mus musculus (Mouse).